The sequence spans 32 residues: Protein YthB (32 aa).

The sequence is that of Protein YthB from Escherichia coli (strain K12).